A 391-amino-acid chain; its full sequence is Elongation factor Tu (391 aa).

Positions 10–201 (KPHVNIGTIG…AVDEYIPTPA (192 aa)) constitute a tr-type G domain. Residues 19 to 26 (GHVDHGKT) form a G1 region. 19–26 (GHVDHGKT) is a binding site for GTP. Residue threonine 26 participates in Mg(2+) binding. Residues 55 to 59 (GITIS) are G2. Residues 76-79 (DCPG) are G3. GTP is bound by residues 76 to 80 (DCPGH) and 131 to 134 (NKVD). Residues 131 to 134 (NKVD) form a G4 region. The segment at 169–171 (SAL) is G5.

This sequence belongs to the TRAFAC class translation factor GTPase superfamily. Classic translation factor GTPase family. EF-Tu/EF-1A subfamily. In terms of assembly, monomer.

It localises to the cytoplasm. It carries out the reaction GTP + H2O = GDP + phosphate + H(+). Its function is as follows. GTP hydrolase that promotes the GTP-dependent binding of aminoacyl-tRNA to the A-site of ribosomes during protein biosynthesis. In Ruegeria pomeroyi (strain ATCC 700808 / DSM 15171 / DSS-3) (Silicibacter pomeroyi), this protein is Elongation factor Tu.